Reading from the N-terminus, the 947-residue chain is Bromodomain testis-specific protein (947 aa).

One can recognise a Bromo 1 domain in the interval 27–133 (RLTNQLQYLQ…KLFVQKLSQM (107 aa)). Position 187 is a phosphoserine (serine 187). The short motif at 209–220 (KGVKRKADTTTP) is the Nuclear localization signal element. The Bromo 2 domain maps to 267–376 (VKVTEQLRHC…DVFETHFSKI (110 aa)). Disordered regions lie at residues 395–421 (ETTGRENTNEASSEGNSSGDSEDERVQ), 444–512 (PFRK…PMNY), 610–690 (NNQL…VKKM), and 849–873 (HLEQNTKEPKVSQENQRDLGNGLTV). Residues 403-413 (NEASSEGNSSG) are compositionally biased toward low complexity. Residues 417–470 (DERVQRLAKLQEQLKAVHQQLQVLSQVPFRKLNKKKEKSKKEKKKEKVNNSNEN) are a coiled coil. Residues 447–462 (KLNKKKEKSKKEKKKE) are compositionally biased toward basic residues. A compositionally biased stretch (basic and acidic residues) spans 470–481 (NPRKMCEQMRLK). Positions 482–494 (EKSKRNQPKKRKQ) are enriched in basic residues. The NET domain occupies 500–582 (KSEDEDNAKP…ACLRKRPLKP (83 aa)). Residues 631-668 (VGSVSRLSESSSSSSSSSESESSSSDLSSSDSSGSESE) are compositionally biased toward low complexity. Composition is skewed to basic and acidic residues over residues 674–690 (TEVKPNDSPSKENVKKM) and 849–865 (HLEQNTKEPKVSQENQR).

This sequence belongs to the BET family. As to quaternary structure, interacts with SMARCE1. Interacts with mRNA splicing machinery proteins SRSF2, DDX5, HNRNPK and TARDBP. Interacts with the acetylated N-terminus of histone H1, H2, H3 and H4. Interacts with P-TEFb components CDK9 and CCNT1/cyclin-T1. In terms of processing, ubiquitinated in a SPOP-dependent manner, leading to proteasomal degradation.

The protein localises to the nucleus. Testis-specific chromatin protein that specifically binds histone H4 acetylated at 'Lys-5' and 'Lys-8' (H4K5ac and H4K8ac, respectively) and plays a key role in spermatogenesis. Required in late pachytene spermatocytes: plays a role in meiotic and post-meiotic cells by binding to acetylated histones at the promoter of specific meiotic and post-meiotic genes, facilitating their activation at the appropriate time. In the post-meiotic phase of spermatogenesis, binds to hyperacetylated histones and participates in their general removal from DNA. Also recognizes and binds a subset of butyrylated histones: able to bind histone H4 butyrylated at 'Lys-8' (H4K8ac), while it is not able to bind H4 butyrylated at 'Lys-5' (H4K5ac). Also acts as a component of the splicing machinery in pachytene spermatocytes and round spermatids and participates in 3'-UTR truncation of specific mRNAs in post-meiotic spermatids. Required for chromocenter organization, a structure comprised of peri-centromeric heterochromatin. This chain is Bromodomain testis-specific protein (BRDT), found in Macaca fascicularis (Crab-eating macaque).